The following is a 934-amino-acid chain: 3-hydroxy-3-methylglutaryl-coenzyme A reductase (934 aa).

Residues 1–111 (MFYHGASANQ…VLNLVRGAET (111 aa)) lie on the Lumenal side of the membrane. A helical membrane pass occupies residues 112 to 132 (FDIALVTCAYIAMFYTLFNLF). Residues 113 to 280 (DIALVTCAYI…STFLSAILSL (168 aa)) form the SSD domain. Residues 133 to 141 (ARMRAVGSK) are Cytoplasmic-facing. Residues 142 to 162 (VWLGLSTLVSSFFAFLFALYI) form a helical membrane-spanning segment. Topologically, residues 163–168 (TTRVLD) are lumenal. A helical membrane pass occupies residues 169 to 189 (LSIPFLSLSEGIPFFVAVVGF). The Cytoplasmic segment spans residues 190-231 (NNKILLAEKVLQNQLNAQSSKNDAPTVLYQALREQGPLLLRD). A helical transmembrane segment spans residues 232-252 (HLFMITAFLGCSFYASYLDGL). Residues 253–256 (KNFC) are Lumenal-facing. Residues 257 to 277 (ILAALILAFDILTTSTFLSAI) traverse the membrane as a helical segment. Residues 278–334 (LSLKLEINQIHRSTLLREQLEDDGLTETTVDDVLKSNSLAGTKTFTDAPSTLVTVAK) are Cytoplasmic-facing. A helical membrane pass occupies residues 335 to 355 (VAGVSVFFGLHFYGFGSAWLS). Over 356 to 421 (DLSAGNETND…GLISTAARDK (66 aa)) the chain is Lumenal. 3 N-linked (GlcNAc...) asparagine glycosylation sites follow: N361, N364, and N382. Residues 422–442 (YISKFILFAFAVSASINVYLL) traverse the membrane as a helical segment. At 443 to 934 (NVARIHTTRL…MQHNRAAAKK (492 aa)) the chain is on the cytoplasmic side. E618 functions as the Charge relay system in the catalytic mechanism. 624–630 (SAMRGCK) contributes to the CoA binding site. NADP(+) contacts are provided by residues 685–687 (SRF) and 712–720 (DAMGMNMIS). K752 (charge relay system) is an active-site residue. CoA is bound at residue 781-783 (VLK). The active-site Charge relay system is D828. 923 to 924 (SH) lines the CoA pocket. H924 functions as the Proton donor in the catalytic mechanism. 928–929 (NR) lines the NADP(+) pocket.

The protein belongs to the HMG-CoA reductase family.

It localises to the endoplasmic reticulum membrane. The enzyme catalyses (R)-mevalonate + 2 NADP(+) + CoA = (3S)-3-hydroxy-3-methylglutaryl-CoA + 2 NADPH + 2 H(+). Its pathway is metabolic intermediate biosynthesis; (R)-mevalonate biosynthesis; (R)-mevalonate from acetyl-CoA: step 3/3. Functionally, HMG-CoA reductase; part of the first module of ergosterol biosynthesis pathway that includes the early steps of the pathway, conserved across all eukaryotes, and which results in the formation of mevalonate from acetyl-coenzyme A (acetyl-CoA). In this module, the cytosolic acetyl-CoA acetyltransferase catalyzes the formation of acetoacetyl-CoA. The hydroxymethylglutaryl-CoA synthase then condenses acetyl-CoA with acetoacetyl-CoA to form HMG-CoA. The rate-limiting step of the early module is the reduction to mevalonate by the 3-hydroxy-3-methylglutaryl-coenzyme A (HMG-CoA) reductase. In Cyberlindnera jadinii (Torula yeast), this protein is 3-hydroxy-3-methylglutaryl-coenzyme A reductase.